The following is a 146-amino-acid chain: Hemoglobin subunit beta (146 aa).

Position 1 is an N-acetylvaline (Val-1). One can recognise a Globin domain in the interval 2 to 146 (DLTAEEKAAV…VANALAHKYH (145 aa)). Phosphoserine is present on Ser-44. Lys-59 carries the post-translational modification N6-acetyllysine. A heme b-binding site is contributed by His-63. The residue at position 82 (Lys-82) is an N6-acetyllysine. His-92 contacts heme b. Position 93 is an S-nitrosocysteine (Cys-93). Position 144 is an N6-acetyllysine (Lys-144).

The protein belongs to the globin family. As to quaternary structure, heterotetramer of two alpha chains and two beta chains. In terms of tissue distribution, red blood cells.

Functionally, involved in oxygen transport from the lung to the various peripheral tissues. The polypeptide is Hemoglobin subunit beta (HBB) (Rhinoceros unicornis (Greater Indian rhinoceros)).